The sequence spans 737 residues: MAIKKPINVKQLSDKLGVPILPDDPQTIYHIQERLGKGSFGQVFKAVHFANGKVVAIKIISLDDQEAIKDVRKEISILAECNYPNIVQYFGSYFKDHQLWIVMEYCGGGSVSDLLQVIDTISEDEIALICREALKGLNYLHEFKKIHRDIKGGNILLNDRGEVKLADFGVSAQLFNTFSKRNTFVGTPYWMAPEVIQENKYDGKADVWSLGITAIEMAEGLPPNSNVHPMRVIFMIPREESPALTDKSIWSDKFQDFISKCLTKDPAERPTAKELLNHEFIQTKKPLSILSDLVENCKTLINNSSMFEDEDEEEGNYSTFVEKKTPSDDEKENNNNTVTNYSTVITKDDDDGSNNYSTVITKDEMYSTVITKDDAQTDDDNNNFSTVITKEDPPTDEESDSSCSSSSSSSRNITSPISKRKPRQPITNSPKISPISSNNINKIPADNVVSSNQATTTTTTTTTTTTTAASTTTDQDEGDVKNIVNKFQLNKPITSSNSTSVTPQKPPFPSNNTTTTSNINTPIKPSNGLKKSNSNTPVQLKTSGDKTPTTTPLKNISNNNSVIYNNSNNINNNNNNNIIAPKSPSPTTGQKIIKTNSGGVLKSSGGLSSKRSPSSKPKHSSSSKEPKESLSENLQNIYRNDCTIQLPFLTLNNISSDYLLSIDYRYNDFKSSLDDLCADPNLISSKLSFSPYIGNLIKSLSYHKDIQENELMTPKESVQNTKIVNDLSSTVKTIFRL.

Residues 29 to 281 (YHIQERLGKG…AKELLNHEFI (253 aa)) form the Protein kinase domain. ATP is bound by residues 35–43 (LGKGSFGQV) and K58. The Proton acceptor role is filled by D149. Disordered stretches follow at residues 305–356 (SMFE…SNNY), 372–475 (KDDA…TTDQ), 491–559 (KPIT…ISNN), and 575–631 (NNNI…ESLS). Low complexity-rich tracts occupy residues 334–345 (NNNTVTNYSTVI), 401–410 (SSCSSSSSSS), 425–444 (PITNSPKISPISSNNINKIP), and 454–473 (ATTTTTTTTTTTTTAASTTT). A compositionally biased stretch (polar residues) spans 491-503 (KPITSSNSTSVTP). The segment covering 510-525 (SNNTTTTSNINTPIKP) has biased composition (low complexity). Polar residues-rich tracts occupy residues 529-554 (LKKSNSNTPVQLKTSGDKTPTTTPLK) and 585-596 (SPTTGQKIIKTN). A compositionally biased stretch (low complexity) spans 597–615 (SGGVLKSSGGLSSKRSPSS).

It belongs to the protein kinase superfamily. STE Ser/Thr protein kinase family. STE20 subfamily. Mg(2+) is required as a cofactor.

The catalysed reaction is L-seryl-[protein] + ATP = O-phospho-L-seryl-[protein] + ADP + H(+). The enzyme catalyses L-threonyl-[protein] + ATP = O-phospho-L-threonyl-[protein] + ADP + H(+). The protein is Serine/threonine-protein kinase dst1 of Dictyostelium discoideum (Social amoeba).